The primary structure comprises 114 residues: MSDDVALPLEFTEAAANKVKHLIADEDNPNLKLRVYITGGGCSGFQYGFTFDDQVNEGDMTIEKQGVGLVVDPMSLQYLVGGAVDYTEGLEGSRFIVTNPNAKSTCGCGSSFSV.

3 residues coordinate iron-sulfur cluster: Cys-42, Cys-106, and Cys-108.

The protein belongs to the HesB/IscA family. Homodimer. Iron-sulfur cluster serves as cofactor.

Required for insertion of 4Fe-4S clusters for at least IspG. This chain is Iron-sulfur cluster insertion protein ErpA, found in Klebsiella pneumoniae (strain 342).